Consider the following 121-residue polypeptide: Basic phospholipase A2 homolog GodMT-II (121 aa).

Disulfide bonds link C26–C115, C28–C44, C43–C95, C49–C121, C50–C88, C57–C81, and C75–C86. The tract at residues 105–117 (KNYKIYPKPLCKK) is important for membrane-damaging activities in eukaryotes and bacteria; heparin-binding.

The protein belongs to the phospholipase A2 family. Group II subfamily. K49 sub-subfamily. Monomer. Expressed by the venom gland.

It is found in the secreted. Snake venom phospholipase A2 homolog that lacks enzymatic activity but shows high myotoxic activities. In vivo, induces a mild edema when subcutaneously injected into mice foot pad. This Cerrophidion godmani (Porthidium godmani) protein is Basic phospholipase A2 homolog GodMT-II.